We begin with the raw amino-acid sequence, 419 residues long: 1,4-beta-D-glucan cellobiohydrolase CEL6B (419 aa).

Positions 1 to 47 are cleaved as a signal peptide; that stretch reads MGESFLLLQPASPALSPTPSSLLLGPTITMRADVLIAALATGALVAA. Positions 111 and 113 each coordinate substrate. Active-site proton donor residues include aspartate 152 and aspartate 199. Tryptophan 247 contacts substrate. Asparagine 284 carries N-linked (GlcNAc...) asparagine glycosylation. Substrate is bound at residue asparagine 287. The N-linked (GlcNAc...) asparagine glycan is linked to asparagine 298. Tryptophan 347 provides a ligand contact to substrate. Asparagine 364 carries N-linked (GlcNAc...) asparagine glycosylation. Positions 375 and 379 each coordinate substrate.

This sequence belongs to the glycosyl hydrolase 6 (cellulase B) family. Both N- and O-glycosylated.

The protein localises to the secreted. The enzyme catalyses Hydrolysis of (1-&gt;4)-beta-D-glucosidic linkages in cellulose and cellotetraose, releasing cellobiose from the non-reducing ends of the chains.. Its function is as follows. Exoglucanase that plays an important function in biomass degradation by catalyzing the hydrolysis of the non-reducing end beta-1,4-glucosidic linkages in cellulose and cellotetraose to release cellobiose. Hydrolyzes crystalline and amorphous cellulose but is inactive on hydroxyethyl cellulose, mannan, galactomannan, xyloglucan, arabinoxylan, arabinan, xylan, and pectin. In Podospora anserina (strain S / ATCC MYA-4624 / DSM 980 / FGSC 10383) (Pleurage anserina), this protein is 1,4-beta-D-glucan cellobiohydrolase CEL6B.